A 128-amino-acid polypeptide reads, in one-letter code: Small ribosomal subunit protein uS11 (128 aa).

Belongs to the universal ribosomal protein uS11 family. As to quaternary structure, part of the 30S ribosomal subunit. Interacts with proteins S7 and S18. Binds to IF-3.

In terms of biological role, located on the platform of the 30S subunit, it bridges several disparate RNA helices of the 16S rRNA. Forms part of the Shine-Dalgarno cleft in the 70S ribosome. This is Small ribosomal subunit protein uS11 from Synechococcus sp. (strain JA-3-3Ab) (Cyanobacteria bacterium Yellowstone A-Prime).